A 185-amino-acid polypeptide reads, in one-letter code: Fimbrial subunit type 1 (185 aa).

A signal peptide spans 1-22 (MRHKLMTSTIASLMFVAAAAVA). Residues Cys46 and Cys86 are joined by a disulfide bond.

It belongs to the fimbrial protein family.

It is found in the fimbrium. This chain is Fimbrial subunit type 1, found in Salmonella typhimurium.